Reading from the N-terminus, the 64-residue chain is Large ribosomal subunit protein bL35 (64 aa).

It belongs to the bacterial ribosomal protein bL35 family.

The chain is Large ribosomal subunit protein bL35 from Shewanella oneidensis (strain ATCC 700550 / JCM 31522 / CIP 106686 / LMG 19005 / NCIMB 14063 / MR-1).